A 124-amino-acid chain; its full sequence is Small ribosomal subunit protein uS12 (124 aa).

The residue at position 89 (Asp89) is a 3-methylthioaspartic acid. The interval 104 to 124 (TAGVKDRRQSRSKYGAKTPKE) is disordered.

This sequence belongs to the universal ribosomal protein uS12 family. In terms of assembly, part of the 30S ribosomal subunit. Contacts proteins S8 and S17. May interact with IF1 in the 30S initiation complex.

Its function is as follows. With S4 and S5 plays an important role in translational accuracy. Functionally, interacts with and stabilizes bases of the 16S rRNA that are involved in tRNA selection in the A site and with the mRNA backbone. Located at the interface of the 30S and 50S subunits, it traverses the body of the 30S subunit contacting proteins on the other side and probably holding the rRNA structure together. The combined cluster of proteins S8, S12 and S17 appears to hold together the shoulder and platform of the 30S subunit. The polypeptide is Small ribosomal subunit protein uS12 (Parasynechococcus marenigrum (strain WH8102)).